A 469-amino-acid chain; its full sequence is Keratin, type I cytoskeletal 16 (469 aa).

The interval methionine 1–isoleucine 20 is disordered. Residues methionine 1 to serine 112 are head. The coil 1A stretch occupies residues glutamate 113–tryptophan 148. Residues glutamate 113 to serine 424 enclose the IF rod domain. The linker 1 stretch occupies residues tyrosine 149 to threonine 166. The coil 1B stretch occupies residues isoleucine 167–leucine 258. The tract at residues arginine 259–isoleucine 281 is linker 12. Residues leucine 282–glutamate 420 form a coil 2 region. The tail stretch occupies residues asparagine 421–aspartate 469. The disordered stretch occupies residues isoleucine 422–aspartate 469. Low complexity-rich tracts occupy residues histidine 423–serine 444 and glutamine 454–aspartate 469.

The protein belongs to the intermediate filament family. As to quaternary structure, heterodimer of a type I and a type II keratin. KRT16 associates with KRT6 isomers (KRT6A or KRT6B). Interacts with TCHP. Interacts with TRADD. As to expression, expressed in the epithelia of the tongue, upper and lower palate, footpad, proximal nail fold and nail bed, penile spine, sweat gland ducts, and back epidermis (at protein level). Expressed in upper suprabasal layers of the corneal epithelium (at protein level). Expressed in internal stratified epithelia in the esophagus and vagina (at protein level). Expressed in transitional stratified squamous epithelia in the forestomach, anal canal, and nasal cavity (at protein level). Expressed in transitional epithelia of the ureter, bladder and urethra (at protein level). In mature hair follicles, expressed in the companion layer of the outer root sheath during anagen and in the club hair sheath during catagen and telogen (at protein level).

Its function is as follows. Epidermis-specific type I keratin that plays a key role in skin. Acts as a regulator of innate immunity in response to skin barrier breach: required for some inflammatory checkpoint for the skin barrier maintenance. This is Keratin, type I cytoskeletal 16 (Krt16) from Mus musculus (Mouse).